The primary structure comprises 376 residues: Actin-related protein T1 (376 aa).

Belongs to the actin family.

The protein resides in the cytoplasm. Its subcellular location is the cytoskeleton. It is found in the nucleus. The protein localises to the cytoplasmic vesicle. It localises to the secretory vesicle. The protein resides in the acrosome. In terms of biological role, negatively regulates the Hedgehog (SHH) signaling. Binds to the promoter of the SHH signaling mediator, GLI1, and inhibits its expression. The sequence is that of Actin-related protein T1 (Actrt1) from Rattus norvegicus (Rat).